Consider the following 243-residue polypeptide: MSMLCYTLIIAFLIGIWAAPKSEDNVPLGSPTTSDLSDTSCAQTHEGLKTSRNTDQRHLAPKKAEDQELGSAANIIVDPKLFQKRRFQSPRVLFSTQPPPLSRDEQSVEFLDNEDTLNRNIRTKRETHPVHNLGEHSVCDSISVWVTNKTKATDIKDNMVTVMVDINLNNEVYKQYFFETKCRNPNPVPSGCRGTDSRHWNSYCTTTQTFVKALTMEGNRASWRFIRIDTACVCVISRKTDNF.

A signal peptide spans 1–18 (MSMLCYTLIIAFLIGIWA). Positions 19-125 (APKSEDNVPL…TLNRNIRTKR (107 aa)) are excised as a propeptide. The tract at residues 45–66 (HEGLKTSRNTDQRHLAPKKAED) is disordered. The segment covering 46–66 (EGLKTSRNTDQRHLAPKKAED) has biased composition (basic and acidic residues). 3 disulfides stabilise this stretch: cysteine 139–cysteine 204, cysteine 182–cysteine 232, and cysteine 192–cysteine 234. N-linked (GlcNAc...) asparagine glycosylation occurs at asparagine 148.

The protein belongs to the NGF-beta family. Homodimer; non-covalently linked. As to expression, expressed by the venom gland.

The protein resides in the secreted. Functionally, nerve growth factor is important for the development and maintenance of the sympathetic and sensory nervous systems. It stimulates division and differentiation of sympathetic and embryonic sensory neurons as well as basal forebrain cholinergic neurons in the brain. Its relevance in the snake venom is not clear. However, it has been shown to inhibit metalloproteinase-dependent proteolysis of platelet glycoprotein Ib alpha, suggesting a metalloproteinase inhibition to prevent metalloprotease autodigestion and/or protection against prey proteases. Binds a lipid between the two protein chains in the homodimer. The lipid-bound form promotes histamine relase from mouse mast cells, contrary to the lipid-free form. In Cryptophis nigrescens (Eastern small-eyed snake), this protein is Venom nerve growth factor.